Consider the following 88-residue polypeptide: CRISPR-associated endoribonuclease Cas2 3 (88 aa).

Position 9 (Asp-9) interacts with Mg(2+).

This sequence belongs to the CRISPR-associated endoribonuclease Cas2 protein family. In terms of assembly, homodimer, forms a heterotetramer with a Cas1 homodimer. It depends on Mg(2+) as a cofactor.

In terms of biological role, CRISPR (clustered regularly interspaced short palindromic repeat), is an adaptive immune system that provides protection against mobile genetic elements (viruses, transposable elements and conjugative plasmids). CRISPR clusters contain sequences complementary to antecedent mobile elements and target invading nucleic acids. CRISPR clusters are transcribed and processed into CRISPR RNA (crRNA). Functions as a ssRNA-specific endoribonuclease. Involved in the integration of spacer DNA into the CRISPR cassette. The polypeptide is CRISPR-associated endoribonuclease Cas2 3 (Thermodesulfovibrio yellowstonii (strain ATCC 51303 / DSM 11347 / YP87)).